We begin with the raw amino-acid sequence, 342 residues long: Lipopolysaccharide heptosyltransferase 1 (342 aa).

Ser188, Ser189, Lys193, Glu225, Asp268, Ser269, Gly270, and His273 together coordinate ADP-L-glycero-beta-D-manno-heptose.

It belongs to the glycosyltransferase 9 family.

Its subcellular location is the cell inner membrane. It carries out the reaction an alpha-Kdo-(2-&gt;4)-alpha-Kdo-(2-&gt;6)-lipid A + ADP-L-glycero-beta-D-manno-heptose = an L-alpha-D-Hep-(1-&gt;5)-[alpha-Kdo-(2-&gt;4)]-alpha-Kdo-(2-&gt;6)-lipid A + ADP + H(+). It participates in bacterial outer membrane biogenesis; LPS core biosynthesis. Its function is as follows. Glycosyltransferase involved in the biosynthesis of the core oligosaccharide region of lipopolysaccharide (LPS). Catalyzes the addition of the first heptose unit to one 3-deoxy-D-manno-octulosonic acid (Kdo) residue of the Kdo2-lipid A module. The protein is Lipopolysaccharide heptosyltransferase 1 of Campylobacter coli.